Here is a 99-residue protein sequence, read N- to C-terminus: Aspartyl/glutamyl-tRNA(Asn/Gln) amidotransferase subunit C (99 aa).

It belongs to the GatC family. As to quaternary structure, heterotrimer of A, B and C subunits.

The enzyme catalyses L-glutamyl-tRNA(Gln) + L-glutamine + ATP + H2O = L-glutaminyl-tRNA(Gln) + L-glutamate + ADP + phosphate + H(+). The catalysed reaction is L-aspartyl-tRNA(Asn) + L-glutamine + ATP + H2O = L-asparaginyl-tRNA(Asn) + L-glutamate + ADP + phosphate + 2 H(+). Its function is as follows. Allows the formation of correctly charged Asn-tRNA(Asn) or Gln-tRNA(Gln) through the transamidation of misacylated Asp-tRNA(Asn) or Glu-tRNA(Gln) in organisms which lack either or both of asparaginyl-tRNA or glutaminyl-tRNA synthetases. The reaction takes place in the presence of glutamine and ATP through an activated phospho-Asp-tRNA(Asn) or phospho-Glu-tRNA(Gln). This is Aspartyl/glutamyl-tRNA(Asn/Gln) amidotransferase subunit C from Kineococcus radiotolerans (strain ATCC BAA-149 / DSM 14245 / SRS30216).